Here is a 132-residue protein sequence, read N- to C-terminus: MGALEPNAGAPNADGLAALLVFPKALIDVLPVLPVLVPNWGIPNAEVVVPPVIVFAVPKLGLPNALPPMLLVLAALFVKGLIPLVLERLGLAPDVNGLPKADITVESLLGSKFNDSLMSFCVKVQQFSVIVL.

Residues 66–86 (LPPMLLVLAALFVKGLIPLVL) traverse the membrane as a helical segment.

It localises to the membrane. This is an uncharacterized protein from Saccharomyces cerevisiae (strain ATCC 204508 / S288c) (Baker's yeast).